Consider the following 600-residue polypeptide: MSCRSYRVSSGHRVGNFSSCSAMTPQNLNRFRANSVSCWSGPGFRGLGSFGSRSVITFGSYSPRIAAVGSRPIHCGVRFGAGCGMGFGDGRGVGLGPRADSCVGLGFGAGSGIGYGFGGPGFGYRVGGVGVPAAPSITAVTVNKSLLTPLNLEIDPNAQRVKKDEKEQIKTLNNKFASFIDKVRFLEQQNKLLETKWSFLQEQKCIRSNLEPLFESYITNLRRQLEVLVSDQARLQAERNHLQDVLEGFKKKYEEEVVCRANAENEFVALKKDVDAAFMNKSDLEANVDTLTQEIDFLKTLYMEEIQLLQSHISETSVIVKMDNSRDLNLDGIIAEVKAQYEEVARRSRADAEAWYQTKYEEMQVTAGQHCDNLRNIRNEINELTRLIQRLKAEIEHAKAQRAKLEAAVAEAEQQGEATLSDAKCKLADLECALQQAKQDMARQLCEYQELMNAKLGLDIEIATYRRLLEGEESRLCEGVGPVNISVSSSRGGLVCGPEPLVAGSTLSRGGVTFSGSSSVCATSGVLASCGPSLGGARVAPATGDLLSTGTRSGSMLISEACVPSVPCPLPTQGGFSSCSGGRSSSVRFVSTTTSCRTKY.

Residues 1-165 (MSCRSYRVSS…PNAQRVKKDE (165 aa)) form a head region. Residues 165-476 (EKEQIKTLNN…RLLEGEESRL (312 aa)) enclose the IF rod domain. The coil 1A stretch occupies residues 166–200 (KEQIKTLNNKFASFIDKVRFLEQQNKLLETKWSFL). The interval 201–210 (QEQKCIRSNL) is linker 1. Residues 211-311 (EPLFESYITN…YMEEIQLLQS (101 aa)) are coil 1B. A linker 12 region spans residues 312–328 (HISETSVIVKMDNSRDL). Residues 329 to 472 (NLDGIIAEVK…ATYRRLLEGE (144 aa)) are coil 2. The tract at residues 473-600 (ESRLCEGVGP…STTTSCRTKY (128 aa)) is tail.

It belongs to the intermediate filament family. As to quaternary structure, heterotetramer of two type I and two type II keratins. Expressed in the hair follicles.

This is Keratin, type II cuticular Hb4 (KRT84) from Homo sapiens (Human).